Consider the following 61-residue polypeptide: Metallothionein-1B (61 aa).

Residues 1–29 (MDPNCSCTTGGSCACAGSCKCKECKCTSC) are beta. 20 residues coordinate a divalent metal cation: C5, C7, C13, C15, C19, C21, C24, C26, C29, C33, C34, C36, C37, C41, C44, C48, C50, C57, C59, and C60. Residues 30–61 (KKCCCSCCPVGCAKCAQGCVCKGSSEKCRCCA) form an alpha region.

The protein belongs to the metallothionein superfamily. Type 1 family. As to quaternary structure, monomer.

Its function is as follows. Metallothioneins have a high content of cysteine residues that bind various heavy metals; these proteins are transcriptionally regulated by both heavy metals and glucocorticoids. This chain is Metallothionein-1B (MT1B), found in Homo sapiens (Human).